The sequence spans 533 residues: Di/tripeptide-binding protein 4 (533 aa).

The signal sequence occupies residues 1–25 (MLHPLLRHLPLALALALCAAGAAQA).

This sequence belongs to the bacterial solute-binding protein 5 family. As to quaternary structure, the complex is composed of two ATP-binding proteins (DppD and DppF), two transmembrane proteins (DppB and DppC) and a solute-binding protein (DppA4). Five orthologous SBPs (DppA1-A5) are present in P.aeruginosa, which increases the substrate specificity of the DppBCDF transporter.

Functionally, part of the ABC transporter DppABCDF involved in the uptake of various di/tripeptides. Prefers dipeptides with acidic residues at the C-terminal end. Efficiently uses tripeptides. In Pseudomonas aeruginosa (strain UCBPP-PA14), this protein is Di/tripeptide-binding protein 4.